Reading from the N-terminus, the 265-residue chain is Short-chain dehydrogenase/reductase phqE (265 aa).

Positions 23, 24, 26, 46, 47, 50, 76, 131, 203, and 205 each coordinate NADP(+). Residues 25-45 traverse the membrane as a helical segment; the sequence is GIGFAVCAAALGHGAIVTIVG.

The protein belongs to the short-chain dehydrogenases/reductases (SDR) family. The cofactor is NADP(+).

The protein localises to the membrane. It participates in alkaloid biosynthesis. Functionally, short-chain dehydrogenase/reductase; part of the gene cluster that mediates the biosynthesis of paraherquamide, a fungal indole alkaloid that belongs to a family of natural products containing a characteristic bicyclo[2.2.2]diazaoctane core. The first steps in the biosynthesis of paraherquamide is the production of the beta-methyl-proline precursor from L-isoleucine. They require oxidation of a terminally hydroxylated L-isoleucine to the corresponding aldehyde by enzymes which have still to be identified. Spontaneous cyclization and dehydration would yield the 4-methyl pyrolline-5-carboxylic acid, which is then reduced by the pyrroline-5-carboxylate reductase phqD leading to the beta-methyl-proline precursor. The next step of paraherquamide biosynthesis involves coupling of beta-methyl-proline and L-tryptophan by the bimodular NRPS phqB, to produce a monooxopiperazine intermediate. The reductase (R) domain of phqB utilizes NADPH for hydride transfer to reduce the thioester bond of the T domain-tethered linear dipeptide to a hemithioaminal intermediate, which spontaneously cleaves the C-S bond to release the aldehyde product. This compound undergoes spontaneous cyclization and dehydration to give a dienamine which is reverse prenylated at C-2 by the reverse prenyltransferase phqJ. The other prenyltransferase present in the cluster, phqI may be a redundant gene in the pathway. During biosynthetic assembly, the key step to produce the polycyclic core is catalyzed by the bifunctional reductase and intramolecular [4+2] Diels-Alderase, phqE, resulting in formation of the [2.2.2] diazaoctane intermediate preparaherquamide. Following formation of preparaherquamide, an indole 2,3-epoxidation-initiated pinacol-like rearrangement is catalyzed by the phqK FAD-dependent monooxygenase. The prenyltransferase phqA, the cytochrome P450 monooxygenase phqL, and the FAD-linked oxidoreductase phqH (or the cytochrome P450 monooxygenase phqM), are proposed to be involved in the formation of the pyran ring. The FAD-dependent monooxygenase phqK is likely responsible for generation of the spiro-oxindole, and the N-methylation is likely mediated by the phqN methyltransferase leading to the isolable natural product paraherquamide F. However, the order of these biosynthetic steps has still to be determined. In late-stage paraherquamide biosynthesis, the third P450 monooxygenase, phqO, is probably responsible for the C-14 hydroxylation, transforming paraherquamide F to paraherquamide G, and paraherquamide E to the final product paraherquamide A. The expansion from the 6-membered ring pyran (in paraherquamides F and G) to the 7-membered dioxepin ring (in paraherquamides A and E) represents a poorly understood but intriguing process that probably involves the 2-oxoglutarate-dependent dioxygenase phqC. Finally, the remaining members of the paraherquamide cluster, including phqI as well as phqM (or phqH), do not have a clearly prescribed role and appear to be redundant. This is Short-chain dehydrogenase/reductase phqE from Penicillium fellutanum.